The sequence spans 437 residues: Serine hydroxymethyltransferase 1 (437 aa).

Residues Leu-132 and 136–138 (GHL) contribute to the (6S)-5,6,7,8-tetrahydrofolate site. Lys-241 carries the N6-(pyridoxal phosphate)lysine modification.

It belongs to the SHMT family. In terms of assembly, homodimer. Pyridoxal 5'-phosphate is required as a cofactor.

The protein localises to the cytoplasm. The enzyme catalyses (6R)-5,10-methylene-5,6,7,8-tetrahydrofolate + glycine + H2O = (6S)-5,6,7,8-tetrahydrofolate + L-serine. The protein operates within one-carbon metabolism; tetrahydrofolate interconversion. Its pathway is amino-acid biosynthesis; glycine biosynthesis; glycine from L-serine: step 1/1. Catalyzes the reversible interconversion of serine and glycine with tetrahydrofolate (THF) serving as the one-carbon carrier. This reaction serves as the major source of one-carbon groups required for the biosynthesis of purines, thymidylate, methionine, and other important biomolecules. Also exhibits THF-independent aldolase activity toward beta-hydroxyamino acids, producing glycine and aldehydes, via a retro-aldol mechanism. In Mesorhizobium japonicum (strain LMG 29417 / CECT 9101 / MAFF 303099) (Mesorhizobium loti (strain MAFF 303099)), this protein is Serine hydroxymethyltransferase 1.